The primary structure comprises 237 residues: Phosphoribosylaminoimidazole-succinocarboxamide synthase (237 aa).

It belongs to the SAICAR synthetase family.

It catalyses the reaction 5-amino-1-(5-phospho-D-ribosyl)imidazole-4-carboxylate + L-aspartate + ATP = (2S)-2-[5-amino-1-(5-phospho-beta-D-ribosyl)imidazole-4-carboxamido]succinate + ADP + phosphate + 2 H(+). It participates in purine metabolism; IMP biosynthesis via de novo pathway; 5-amino-1-(5-phospho-D-ribosyl)imidazole-4-carboxamide from 5-amino-1-(5-phospho-D-ribosyl)imidazole-4-carboxylate: step 1/2. The polypeptide is Phosphoribosylaminoimidazole-succinocarboxamide synthase (Campylobacter fetus subsp. fetus (strain 82-40)).